Consider the following 465-residue polypeptide: MSLEKAQELDTKYPTYKDEFAVPTFKSLGIETSQFNENTDSIYLCGNSLGLMPKSTKQAINDELNAWIERGVESHFNHPGQSEGKTPWVDIDLPLVPLVAPIVGAKENEVAVMGSLTSNLNALLINFYKPKDKRTKILFEKQAFPSDYYAFLNLVKLHGYDESHLVQLKVLPGNTYLTTEQIKKAVDDNIDELAMVCFPGIQYYTGQFFKIEEITNYVKNKGKNEIVVGWDLAHAVGNVPLKLHDWNVDFAAWCSYKYLNSGPGGIAGIYVHEQYTKDNSKTSFSPRLAGWWGNNASDRFKMLEEFDPINSALSYRQSNPSVIDVVAVKSSLELFKKVGGVPKLRKKSIALTQFLQDLLVSSKYYFRSDNDTDRSKIGFTILTPLNQEERGAQLSVLFQPHYDDKQKNIMERVSGYLHNHAIICDERRPDVIRFAPLPLYNTFEETYYAAQRLFEALDKISSEEI.

Pyridoxal 5'-phosphate contacts are provided by residues L116, T117, 144–147 (FPSD), D231, H234, and Y256. K257 is subject to N6-(pyridoxal phosphate)lysine. Residues W291 and N319 each contribute to the pyridoxal 5'-phosphate site.

The protein belongs to the kynureninase family. As to quaternary structure, homodimer. It depends on pyridoxal 5'-phosphate as a cofactor.

The protein localises to the cytoplasm. The enzyme catalyses L-kynurenine + H2O = anthranilate + L-alanine + H(+). It catalyses the reaction 3-hydroxy-L-kynurenine + H2O = 3-hydroxyanthranilate + L-alanine + H(+). The protein operates within amino-acid degradation; L-kynurenine degradation; L-alanine and anthranilate from L-kynurenine: step 1/1. Its pathway is cofactor biosynthesis; NAD(+) biosynthesis; quinolinate from L-kynurenine: step 2/3. Functionally, catalyzes the cleavage of L-kynurenine (L-Kyn) and L-3-hydroxykynurenine (L-3OHKyn) into anthranilic acid (AA) and 3-hydroxyanthranilic acid (3-OHAA), respectively. The sequence is that of Kynureninase from Scheffersomyces stipitis (strain ATCC 58785 / CBS 6054 / NBRC 10063 / NRRL Y-11545) (Yeast).